The following is a 395-amino-acid chain: Putative gustatory receptor 93b (395 aa).

The Cytoplasmic segment spans residues 1-18; that stretch reads MSGLLVMPRILRCLNVSR. A helical membrane pass occupies residues 19–39; that stretch reads ISAILLRSCFLYGTFFGVITF. Residues 40–89 lie on the Extracellular side of the membrane; the sequence is RIERKDSQLVAINRRGYLWICLVIRLLASCFYGYSYDAWSGQYEDMYLRA. The chain crosses the membrane as a helical span at residues 90 to 110; it reads FFGFRLIGCLICSVIILVMQF. The Cytoplasmic segment spans residues 111-153; that stretch reads WFGEELINLVNRFLQLFRRMQSLTNSPKNRFGDRAEFLLMFSK. The chain crosses the membrane as a helical span at residues 154-174; the sequence is VFSLLFVFMAFRLMLSPWFLL. Residues 175 to 183 lie on the Extracellular side of the membrane; sequence TLVCDLYTS. The chain crosses the membrane as a helical span at residues 184 to 204; it reads VGTGMITHLCFVGYLSIGVLY. At 205–267 the chain is on the cytoplasmic side; that stretch reads RDLNNYVDCQ…RSFQQLFDLP (63 aa). A helical membrane pass occupies residues 268–288; it reads LFLSLAQSLLAMSMVSYHAIL. Residues 289 to 293 lie on the Extracellular side of the membrane; the sequence is RRQYS. Residues 294–314 form a helical membrane-spanning segment; it reads FNLWGLVIKLLIDVVLLTMSV. The Cytoplasmic portion of the chain corresponds to 315–369; the sequence is HSAVNGSRLIRRLSFENFYVTDSQSYHQKLELFLGRLQHQELRVFPLGLFEVSNE. Residues 370–390 traverse the membrane as a helical segment; that stretch reads LTLFFLSAMVTYLVFLVQYGM. At 391–395 the chain is on the extracellular side; sequence QSQQI.

This sequence belongs to the insect chemoreceptor superfamily. Gustatory receptor (GR) family. Gr93a subfamily. As to expression, in larvae, is expressed in neurons of the terminal external chemosensory organ and of the dorsal pharyngeal sense organ.

It localises to the cell membrane. Probable gustatory receptor which mediates acceptance or avoidance behavior, depending on its substrates. In Drosophila melanogaster (Fruit fly), this protein is Putative gustatory receptor 93b (Gr93b).